The following is a 62-amino-acid chain: Photosystem II reaction center protein Z (62 aa).

Transmembrane regions (helical) follow at residues 8–28 (AVFALIATSSILLISVPVVFA) and 41–61 (FSGTSLWIGLVFLVGILNSLI).

This sequence belongs to the PsbZ family. In terms of assembly, PSII is composed of 1 copy each of membrane proteins PsbA, PsbB, PsbC, PsbD, PsbE, PsbF, PsbH, PsbI, PsbJ, PsbK, PsbL, PsbM, PsbT, PsbY, PsbZ, Psb30/Ycf12, at least 3 peripheral proteins of the oxygen-evolving complex and a large number of cofactors. It forms dimeric complexes.

The protein localises to the plastid. It localises to the chloroplast thylakoid membrane. Functionally, may control the interaction of photosystem II (PSII) cores with the light-harvesting antenna, regulates electron flow through the 2 photosystem reaction centers. PSII is a light-driven water plastoquinone oxidoreductase, using light energy to abstract electrons from H(2)O, generating a proton gradient subsequently used for ATP formation. The chain is Photosystem II reaction center protein Z from Gossypium barbadense (Sea Island cotton).